A 154-amino-acid polypeptide reads, in one-letter code: NADPH-dependent 7-cyano-7-deazaguanine reductase (154 aa).

Residues 1 to 13 (MSKTDVSGLSQLG) show a composition bias toward polar residues. A disordered region spans residues 1–24 (MSKTDVSGLSQLGRQVDAPTSPET). The active-site Thioimide intermediate is Cys52. The active-site Proton donor is Asp59. Substrate is bound by residues 74–76 (VES) and 93–94 (HE).

This sequence belongs to the GTP cyclohydrolase I family. QueF type 1 subfamily.

It is found in the cytoplasm. It catalyses the reaction 7-aminomethyl-7-carbaguanine + 2 NADP(+) = 7-cyano-7-deazaguanine + 2 NADPH + 3 H(+). It functions in the pathway tRNA modification; tRNA-queuosine biosynthesis. Functionally, catalyzes the NADPH-dependent reduction of 7-cyano-7-deazaguanine (preQ0) to 7-aminomethyl-7-deazaguanine (preQ1). The chain is NADPH-dependent 7-cyano-7-deazaguanine reductase from Allorhizobium ampelinum (strain ATCC BAA-846 / DSM 112012 / S4) (Agrobacterium vitis (strain S4)).